The sequence spans 379 residues: MNVFWFLPTHGDGHYLGTTKGARPVTLNYLKQVAQAADDLGYYGVLIPTGRSCEDSWVIASALVPLTERLKYLVAIRPGIISPTVSARMAATLDRLSGGRLLINVVTGGDPDENRGDGSFLDHSERYEVTDEFLHIWRRVLQGEAVDFEGKHLRVQNAKALYPPIQKPYPPLYFGGSSDAAHDLAADQVDVYLTWGEPPAAVAQKLADVRERAARKGRTVKFGIRLHVIVRQTSEEAWKAASTLIEHISDETIAAAQKSFSRFDSEGQRRMAALHDGRRDNLEIAPNLWAGVGLVRGGAGTALVGNPQEVAERIKEYADLGIESFIFSAYPHLEEAYRFAELVFPLLPEPYASLAGRGITNLTGPFGEMIANDLPPQAK.

This sequence belongs to the SsuD family.

It catalyses the reaction an alkanesulfonate + FMNH2 + O2 = an aldehyde + FMN + sulfite + H2O + 2 H(+). Its function is as follows. Catalyzes the desulfonation of aliphatic sulfonates. This is Alkanesulfonate monooxygenase from Pseudomonas syringae pv. tomato (strain ATCC BAA-871 / DC3000).